A 485-amino-acid chain; its full sequence is Glutamyl-tRNA(Gln) amidotransferase subunit A (485 aa).

Active-site charge relay system residues include lysine 78 and serine 153. Residue serine 177 is the Acyl-ester intermediate of the active site.

Belongs to the amidase family. GatA subfamily. Heterotrimer of A, B and C subunits.

It catalyses the reaction L-glutamyl-tRNA(Gln) + L-glutamine + ATP + H2O = L-glutaminyl-tRNA(Gln) + L-glutamate + ADP + phosphate + H(+). Allows the formation of correctly charged Gln-tRNA(Gln) through the transamidation of misacylated Glu-tRNA(Gln) in organisms which lack glutaminyl-tRNA synthetase. The reaction takes place in the presence of glutamine and ATP through an activated gamma-phospho-Glu-tRNA(Gln). This is Glutamyl-tRNA(Gln) amidotransferase subunit A from Bacillus cytotoxicus (strain DSM 22905 / CIP 110041 / 391-98 / NVH 391-98).